The sequence spans 180 residues: 2-oxoglutarate dehydrogenase, mitochondrial (180 aa).

An N6-succinyllysine modification is found at lysine 14. Residue serine 40 is modified to Phosphoserine. A thiamine diphosphate-binding site is contributed by arginine 64.

Belongs to the alpha-ketoglutarate dehydrogenase family. In terms of assembly, homodimer. The 2-oxoglutarate dehydrogenase complex is composed of OGDH (2-oxoglutarate dehydrogenase; E1), DLST (dihydrolipoamide succinyltransferase; E2) and DLD (dihydrolipoamide dehydrogenase; E3). It contains multiple copies of the three enzymatic components (E1, E2 and E3). In the nucleus, the 2-oxoglutarate dehydrogenase complex associates with KAT2A. Interacts with ABHD11; this interaction maintains the functional lipoylation of the 2-oxoglutarate dehydrogenase complex. The cofactor is thiamine diphosphate. Requires Mg(2+) as cofactor.

Its subcellular location is the mitochondrion matrix. It localises to the nucleus. The enzyme catalyses N(6)-[(R)-lipoyl]-L-lysyl-[protein] + 2-oxoglutarate + H(+) = N(6)-[(R)-S(8)-succinyldihydrolipoyl]-L-lysyl-[protein] + CO2. Its activity is regulated as follows. Calcium ions and ADP stimulate, whereas ATP and NADH reduce catalytic activity. 2-oxoglutarate dehydrogenase (E1) component of the 2-oxoglutarate dehydrogenase complex (OGDHC), which mediates the decarboxylation of alpha-ketoglutarate. The 2-oxoglutarate dehydrogenase complex catalyzes the overall conversion of 2-oxoglutarate to succinyl-CoA and CO(2). The 2-oxoglutarate dehydrogenase complex is mainly active in the mitochondrion. A fraction of the 2-oxoglutarate dehydrogenase complex also localizes in the nucleus and is required for lysine succinylation of histones: associates with KAT2A on chromatin and provides succinyl-CoA to histone succinyltransferase KAT2A. This Mesocricetus auratus (Golden hamster) protein is 2-oxoglutarate dehydrogenase, mitochondrial.